The sequence spans 385 residues: Pectate lyase E (385 aa).

The first 30 residues, 1–30 (MKNTRVRSIGTKSLLAAVVTAALMATSAYA), serve as a signal peptide directing secretion. Asp164 contacts Ca(2+). The stretch at 177–182 (DHVTIS) is repeat 1. The segment at 177–218 (DHVTISDGSFTDDKYTTKDGEKYVQHDGALDIKKGSDYVTIS) is 2 X 6 AA approximate repeats. Asp207 contributes to the Ca(2+) binding site. Residues 213 to 218 (DYVTIS) form repeat 2. Arg260 is an active-site residue.

It belongs to the polysaccharide lyase 1 family. PLBC subfamily. It depends on Ca(2+) as a cofactor.

Its subcellular location is the secreted. The catalysed reaction is Eliminative cleavage of (1-&gt;4)-alpha-D-galacturonan to give oligosaccharides with 4-deoxy-alpha-D-galact-4-enuronosyl groups at their non-reducing ends.. The protein operates within glycan metabolism; pectin degradation; 2-dehydro-3-deoxy-D-gluconate from pectin: step 2/5. In terms of biological role, involved in maceration and soft-rotting of plant tissue. The protein is Pectate lyase E (pelE) of Dickeya chrysanthemi (Pectobacterium chrysanthemi).